The sequence spans 233 residues: LexA repressor (233 aa).

The H-T-H motif DNA-binding region spans 26 to 46 (FDEMKDALDLRSKSGIHRLIT). Catalysis depends on for autocatalytic cleavage activity residues serine 154 and lysine 192.

It belongs to the peptidase S24 family. Homodimer.

The enzyme catalyses Hydrolysis of Ala-|-Gly bond in repressor LexA.. Its function is as follows. Represses a number of genes involved in the response to DNA damage (SOS response), including recA and lexA. In the presence of single-stranded DNA, RecA interacts with LexA causing an autocatalytic cleavage which disrupts the DNA-binding part of LexA, leading to derepression of the SOS regulon and eventually DNA repair. In Nitrobacter winogradskyi (strain ATCC 25391 / DSM 10237 / CIP 104748 / NCIMB 11846 / Nb-255), this protein is LexA repressor.